A 465-amino-acid chain; its full sequence is Spermidine/putrescine import ATP-binding protein PotA (465 aa).

Positions 1 to 18 (MTATSGARTSDARTSGAR) are enriched in polar residues. The interval 1–21 (MTATSGARTSDARTSGARTSD) is disordered. An ABC transporter domain is found at 30–264 (IELVGVAKDY…PRTRFVAGFI (235 aa)). ATP is bound at residue 66–73 (GPSGCGKS).

It belongs to the ABC transporter superfamily. Spermidine/putrescine importer (TC 3.A.1.11.1) family. In terms of assembly, the complex is composed of two ATP-binding proteins (PotA), two transmembrane proteins (PotB and PotC) and a solute-binding protein (PotD).

The protein resides in the cell membrane. The catalysed reaction is ATP + H2O + polyamine-[polyamine-binding protein]Side 1 = ADP + phosphate + polyamineSide 2 + [polyamine-binding protein]Side 1.. Functionally, part of the ABC transporter complex PotABCD involved in spermidine/putrescine import. Responsible for energy coupling to the transport system. This Frankia alni (strain DSM 45986 / CECT 9034 / ACN14a) protein is Spermidine/putrescine import ATP-binding protein PotA.